The following is a 309-amino-acid chain: Ornithine carbamoyltransferase (309 aa).

Carbamoyl phosphate is bound by residues 57–60 (STRT), glutamine 84, arginine 108, and 135–138 (HPCQ). L-ornithine contacts are provided by residues asparagine 166, aspartate 224, and 228-229 (SM). Carbamoyl phosphate contacts are provided by residues 264 to 265 (CL) and arginine 292.

Belongs to the aspartate/ornithine carbamoyltransferase superfamily. OTCase family.

The protein localises to the cytoplasm. The catalysed reaction is carbamoyl phosphate + L-ornithine = L-citrulline + phosphate + H(+). Its pathway is amino-acid biosynthesis; L-arginine biosynthesis; L-arginine from L-ornithine and carbamoyl phosphate: step 1/3. Functionally, reversibly catalyzes the transfer of the carbamoyl group from carbamoyl phosphate (CP) to the N(epsilon) atom of ornithine (ORN) to produce L-citrulline. In Paracidovorax citrulli (strain AAC00-1) (Acidovorax citrulli), this protein is Ornithine carbamoyltransferase.